We begin with the raw amino-acid sequence, 248 residues long: Triosephosphate isomerase (248 aa).

Residues asparagine 12 and lysine 14 each coordinate substrate. The segment at 16–30 is igE-binding; it reads NGDRAGIDSIISFMK. Histidine 95 (electrophile) is an active-site residue. Glutamate 165 (proton acceptor) is an active-site residue. 2 igE-binding regions span residues 166–180 and 205–219; these read PVWAIGTGKTATPEQ and RIIYGGSVTPGNCKE.

The protein belongs to the triosephosphate isomerase family. Homodimer. As to expression, expressed in skeletal muscle (at protein level).

The protein resides in the cytoplasm. It carries out the reaction D-glyceraldehyde 3-phosphate = dihydroxyacetone phosphate. The catalysed reaction is dihydroxyacetone phosphate = methylglyoxal + phosphate. It participates in carbohydrate biosynthesis; gluconeogenesis. The protein operates within carbohydrate degradation; glycolysis; D-glyceraldehyde 3-phosphate from glycerone phosphate: step 1/1. Functionally, triosephosphate isomerase is an extremely efficient metabolic enzyme that catalyzes the interconversion between dihydroxyacetone phosphate (DHAP) and D-glyceraldehyde-3-phosphate (G3P) in glycolysis and gluconeogenesis. Its function is as follows. It is also responsible for the non-negligible production of methylglyoxal a reactive cytotoxic side-product that modifies and can alter proteins, DNA and lipids. This chain is Triosephosphate isomerase, found in Procambarus clarkii (Red swamp crayfish).